The following is a 159-amino-acid chain: Peptide methionine sulfoxide reductase MsrB (159 aa).

The MsrB domain maps to 14 to 137 (TEKLKENLTE…NSASLKFIAK (124 aa)). Cys126 acts as the Nucleophile in catalysis.

Belongs to the MsrB Met sulfoxide reductase family.

The catalysed reaction is L-methionyl-[protein] + [thioredoxin]-disulfide + H2O = L-methionyl-(R)-S-oxide-[protein] + [thioredoxin]-dithiol. This Hathewaya histolytica (Clostridium histolyticum) protein is Peptide methionine sulfoxide reductase MsrB.